We begin with the raw amino-acid sequence, 320 residues long: MLSKRNPQLNRNGELIHLLSIEGLPRSIVTHILDTAANFVSVNDREVKKVPLLRGKSVFNLFFENSTRTRTTFEIAAKRLSADVLNLDIARSSASKGESLLDTIANLSAMAADLFVVRHSESGAPYLIAQHVAPHVHVINAGDGRHAHPTQGLLDMYTIRHYKKDFSNLTVAIVGDVLHSRVARSDIHGLTTLGCPEVRVVGPRTLVPGDLSHMGVRVCHTLEEGIRDADVVIMLRLQNERMSGALLPSSQEYFKSFGLTPEKLRLAKPDAIVMHPGPINRGVEIDSAVVDGPQAVILPQVTFGIAVRMAVMSIVAGNEA.

The carbamoyl phosphate site is built by R68 and T69. Position 96 (K96) interacts with L-aspartate. Residues R118, H148, and Q151 each contribute to the carbamoyl phosphate site. L-aspartate is bound by residues R181 and R236. Carbamoyl phosphate contacts are provided by G277 and P278.

The protein belongs to the aspartate/ornithine carbamoyltransferase superfamily. ATCase family. In terms of assembly, heterododecamer (2C3:3R2) of six catalytic PyrB chains organized as two trimers (C3), and six regulatory PyrI chains organized as three dimers (R2).

The enzyme catalyses carbamoyl phosphate + L-aspartate = N-carbamoyl-L-aspartate + phosphate + H(+). Its pathway is pyrimidine metabolism; UMP biosynthesis via de novo pathway; (S)-dihydroorotate from bicarbonate: step 2/3. Functionally, catalyzes the condensation of carbamoyl phosphate and aspartate to form carbamoyl aspartate and inorganic phosphate, the committed step in the de novo pyrimidine nucleotide biosynthesis pathway. The polypeptide is Aspartate carbamoyltransferase catalytic subunit (Paracidovorax citrulli (strain AAC00-1) (Acidovorax citrulli)).